The primary structure comprises 327 residues: DNA-directed RNA polymerase subunit alpha (327 aa).

Residues 1-233 (MVREKVKVST…NLFIPFLHVE (233 aa)) are alpha N-terminal domain (alpha-NTD). Residues 267 to 327 (LAFQYIFIDQ…KKILDILEKK (61 aa)) are alpha C-terminal domain (alpha-CTD).

The protein belongs to the RNA polymerase alpha chain family. In terms of assembly, in plastids the minimal PEP RNA polymerase catalytic core is composed of four subunits: alpha, beta, beta', and beta''. When a (nuclear-encoded) sigma factor is associated with the core the holoenzyme is formed, which can initiate transcription.

The protein resides in the plastid. Its subcellular location is the chloroplast. It carries out the reaction RNA(n) + a ribonucleoside 5'-triphosphate = RNA(n+1) + diphosphate. DNA-dependent RNA polymerase catalyzes the transcription of DNA into RNA using the four ribonucleoside triphosphates as substrates. The sequence is that of DNA-directed RNA polymerase subunit alpha from Nasturtium officinale (Watercress).